The following is a 239-amino-acid chain: Ribonuclease PH (239 aa).

Phosphate contacts are provided by residues Arg86 and 124–126 (GTR).

It belongs to the RNase PH family. In terms of assembly, homohexameric ring arranged as a trimer of dimers.

The enzyme catalyses tRNA(n+1) + phosphate = tRNA(n) + a ribonucleoside 5'-diphosphate. Its function is as follows. Phosphorolytic 3'-5' exoribonuclease that plays an important role in tRNA 3'-end maturation. Removes nucleotide residues following the 3'-CCA terminus of tRNAs; can also add nucleotides to the ends of RNA molecules by using nucleoside diphosphates as substrates, but this may not be physiologically important. Probably plays a role in initiation of 16S rRNA degradation (leading to ribosome degradation) during starvation. The protein is Ribonuclease PH of Aromatoleum aromaticum (strain DSM 19018 / LMG 30748 / EbN1) (Azoarcus sp. (strain EbN1)).